The following is a 368-amino-acid chain: 3-dehydroquinate synthase (368 aa).

NAD(+) contacts are provided by residues 131-132 (TT), lysine 144, and lysine 153. 3 residues coordinate Zn(2+): glutamate 186, histidine 249, and histidine 267.

This sequence belongs to the sugar phosphate cyclases superfamily. Dehydroquinate synthase family. It depends on Co(2+) as a cofactor. Zn(2+) is required as a cofactor. The cofactor is NAD(+).

The protein localises to the cytoplasm. The enzyme catalyses 7-phospho-2-dehydro-3-deoxy-D-arabino-heptonate = 3-dehydroquinate + phosphate. The protein operates within metabolic intermediate biosynthesis; chorismate biosynthesis; chorismate from D-erythrose 4-phosphate and phosphoenolpyruvate: step 2/7. Functionally, catalyzes the conversion of 3-deoxy-D-arabino-heptulosonate 7-phosphate (DAHP) to dehydroquinate (DHQ). The protein is 3-dehydroquinate synthase of Pelagibacter ubique (strain HTCC1062).